The sequence spans 80 residues: Conotoxin Cl11.2 (80 aa).

A signal peptide spans M1–G19. Residues E20–Q41 constitute a propeptide that is removed on maturation. Intrachain disulfides connect C45/C59, C52/C63, C58/C68, and C62/C74.

Belongs to the conotoxin I1 superfamily. Expressed by the venom duct.

It is found in the secreted. In Californiconus californicus (California cone), this protein is Conotoxin Cl11.2.